A 292-amino-acid chain; its full sequence is ATP synthase gamma chain (292 aa).

Belongs to the ATPase gamma chain family. In terms of assembly, F-type ATPases have 2 components, CF(1) - the catalytic core - and CF(0) - the membrane proton channel. CF(1) has five subunits: alpha(3), beta(3), gamma(1), delta(1), epsilon(1). CF(0) has three main subunits: a, b and c.

The protein resides in the cell inner membrane. In terms of biological role, produces ATP from ADP in the presence of a proton gradient across the membrane. The gamma chain is believed to be important in regulating ATPase activity and the flow of protons through the CF(0) complex. This Rhodopseudomonas palustris (strain BisB18) protein is ATP synthase gamma chain.